We begin with the raw amino-acid sequence, 316 residues long: 4-hydroxy-3-methylbut-2-enyl diphosphate reductase (316 aa).

Cys12 contributes to the [4Fe-4S] cluster binding site. His41 and His74 together coordinate (2E)-4-hydroxy-3-methylbut-2-enyl diphosphate. Dimethylallyl diphosphate contacts are provided by His41 and His74. Residues His41 and His74 each coordinate isopentenyl diphosphate. Cys96 serves as a coordination point for [4Fe-4S] cluster. A (2E)-4-hydroxy-3-methylbut-2-enyl diphosphate-binding site is contributed by His124. Residue His124 coordinates dimethylallyl diphosphate. An isopentenyl diphosphate-binding site is contributed by His124. The active-site Proton donor is the Glu126. Thr169 contacts (2E)-4-hydroxy-3-methylbut-2-enyl diphosphate. Cys199 contacts [4Fe-4S] cluster. (2E)-4-hydroxy-3-methylbut-2-enyl diphosphate is bound by residues Ser227, Ser228, Asn229, and Ser271. 4 residues coordinate dimethylallyl diphosphate: Ser227, Ser228, Asn229, and Ser271. Positions 227, 228, 229, and 271 each coordinate isopentenyl diphosphate.

It belongs to the IspH family. [4Fe-4S] cluster is required as a cofactor.

It catalyses the reaction isopentenyl diphosphate + 2 oxidized [2Fe-2S]-[ferredoxin] + H2O = (2E)-4-hydroxy-3-methylbut-2-enyl diphosphate + 2 reduced [2Fe-2S]-[ferredoxin] + 2 H(+). The enzyme catalyses dimethylallyl diphosphate + 2 oxidized [2Fe-2S]-[ferredoxin] + H2O = (2E)-4-hydroxy-3-methylbut-2-enyl diphosphate + 2 reduced [2Fe-2S]-[ferredoxin] + 2 H(+). It functions in the pathway isoprenoid biosynthesis; dimethylallyl diphosphate biosynthesis; dimethylallyl diphosphate from (2E)-4-hydroxy-3-methylbutenyl diphosphate: step 1/1. Its pathway is isoprenoid biosynthesis; isopentenyl diphosphate biosynthesis via DXP pathway; isopentenyl diphosphate from 1-deoxy-D-xylulose 5-phosphate: step 6/6. Catalyzes the conversion of 1-hydroxy-2-methyl-2-(E)-butenyl 4-diphosphate (HMBPP) into a mixture of isopentenyl diphosphate (IPP) and dimethylallyl diphosphate (DMAPP). Acts in the terminal step of the DOXP/MEP pathway for isoprenoid precursor biosynthesis. In Stenotrophomonas maltophilia (strain K279a), this protein is 4-hydroxy-3-methylbut-2-enyl diphosphate reductase.